We begin with the raw amino-acid sequence, 442 residues long: Alpha-1,6-mannosyl-glycoprotein 2-beta-N-acetylglucosaminyltransferase (442 aa).

The Cytoplasmic segment spans residues 1 to 9 (MRFRIYKRK). A helical; Signal-anchor for type II membrane protein membrane pass occupies residues 10–29 (VLILTLVVAACGFVLWSSNG). Residues 30 to 442 (RQRKSDALGP…ELCKSYRRLQ (413 aa)) lie on the Lumenal side of the membrane. N-linked (GlcNAc...) asparagine glycans are attached at residues Asn-64 and Asn-81. Residues 118–122 (QVHNR) and Asp-149 each bind substrate. Cysteines 191 and 205 form a disulfide. 224 to 228 (QTKHH) is a substrate binding site. Asp-256 lines the Mn(2+) pocket. Cys-278 and Cys-281 form a disulfide bridge. Arg-293 provides a ligand contact to substrate. 3 cysteine pairs are disulfide-bonded: Cys-329–Cys-352, Cys-334–Cys-435, and Cys-373–Cys-381. A Mn(2+)-binding site is contributed by His-369.

Belongs to the glycosyltransferase 16 (GT16) protein family. In terms of assembly, homodimer. Mn(2+) serves as cofactor. In terms of tissue distribution, detected in liver, lung, testis, kidney, brain, spleen, thymus, uterus and intestine.

Its subcellular location is the golgi apparatus membrane. It catalyses the reaction an N(4)-{beta-D-GlcNAc-(1-&gt;2)-alpha-D-Man-(1-&gt;3)-[alpha-D-Man-(1-&gt;6)]-beta-D-Man-(1-&gt;4)-beta-D-GlcNAc-(1-&gt;4)-beta-D-GlcNAc}-L-asparaginyl-[protein] + UDP-N-acetyl-alpha-D-glucosamine = N(4)-{beta-D-GlcNAc-(1-&gt;2)-alpha-D-Man-(1-&gt;3)-[beta-D-GlcNAc-(1-&gt;2)-alpha-D-Man-(1-&gt;6)]-beta-D-Man-(1-&gt;4)-beta-D-GlcNAc-(1-&gt;4)-beta-D-GlcNAc}-L-asparaginyl-[protein] + UDP + H(+). The protein operates within protein modification; protein glycosylation. Its function is as follows. Plays an essential role in protein N-glycosylation. Catalyzes the transfer of N-acetylglucosamine (GlcNAc) onto the free terminal mannose moiety in the core structure of the nascent N-linked glycan chain, giving rise to the second branch in complex glycans. The sequence is that of Alpha-1,6-mannosyl-glycoprotein 2-beta-N-acetylglucosaminyltransferase (Mgat2) from Mus musculus (Mouse).